A 330-amino-acid chain; its full sequence is Aspartate--ammonia ligase (330 aa).

Belongs to the class-II aminoacyl-tRNA synthetase family. AsnA subfamily.

The protein localises to the cytoplasm. The catalysed reaction is L-aspartate + NH4(+) + ATP = L-asparagine + AMP + diphosphate + H(+). The protein operates within amino-acid biosynthesis; L-asparagine biosynthesis; L-asparagine from L-aspartate (ammonia route): step 1/1. In Escherichia fergusonii (strain ATCC 35469 / DSM 13698 / CCUG 18766 / IAM 14443 / JCM 21226 / LMG 7866 / NBRC 102419 / NCTC 12128 / CDC 0568-73), this protein is Aspartate--ammonia ligase.